Reading from the N-terminus, the 364-residue chain is tRNA N6-adenosine threonylcarbamoyltransferase (364 aa).

The Fe cation site is built by H115 and H119. Substrate-binding positions include 137–141, D170, G183, and N288; that span reads LVSGG. D316 is a binding site for Fe cation.

This sequence belongs to the KAE1 / TsaD family. Requires Fe(2+) as cofactor.

The protein localises to the cytoplasm. The catalysed reaction is L-threonylcarbamoyladenylate + adenosine(37) in tRNA = N(6)-L-threonylcarbamoyladenosine(37) in tRNA + AMP + H(+). Required for the formation of a threonylcarbamoyl group on adenosine at position 37 (t(6)A37) in tRNAs that read codons beginning with adenine. Is involved in the transfer of the threonylcarbamoyl moiety of threonylcarbamoyl-AMP (TC-AMP) to the N6 group of A37, together with TsaE and TsaB. TsaD likely plays a direct catalytic role in this reaction. This is tRNA N6-adenosine threonylcarbamoyltransferase from Bartonella bacilliformis (strain ATCC 35685 / KC583 / Herrer 020/F12,63).